The primary structure comprises 139 residues: Large ribosomal subunit protein uL16 (139 aa).

Belongs to the universal ribosomal protein uL16 family. In terms of assembly, part of the 50S ribosomal subunit.

Functionally, binds 23S rRNA and is also seen to make contacts with the A and possibly P site tRNAs. This Parvibaculum lavamentivorans (strain DS-1 / DSM 13023 / NCIMB 13966) protein is Large ribosomal subunit protein uL16.